Consider the following 928-residue polypeptide: Protein ARABIDILLO 2 (928 aa).

A Nuclear localization signal motif is present at residues 3–8; the sequence is RRVRQR. The 47-residue stretch at 37-83 folds into the F-box domain; sequence YVNWTSLPYDTVFHLFTRLNYRDRASLASTCRTWRSLGASSFLWSSL. 13 ARM repeats span residues 147–186, 237–278, 303–341, 370–409, 419–458, 460–499, 501–543, 545–585, 591–630, 632–674, 676–715, 717–757, and 824–864; these read AARH…KLRV, TSNI…KSSQ, KGKV…DLIR, SQGL…TFIV, CGRA…NLSV, AKVA…NLSV, EEHK…NLAA, DKCS…NLAA, GNNA…NLAF, DKNR…GLSV, EANS…NLSF, PGNA…YMFD, and IPEA…QFTI.

It belongs to the beta-catenin family. In terms of tissue distribution, expressed ubiquitously.

The protein localises to the nucleus. Functionally, promotes lateral root initiation and development, independently of auxin (IAA) and abscisis acid (ABA). The sequence is that of Protein ARABIDILLO 2 from Arabidopsis thaliana (Mouse-ear cress).